The following is a 28-amino-acid chain: Aryl acylamidase (28 aa).

In terms of assembly, homodimer.

The enzyme catalyses an anilide + H2O = aniline + a carboxylate + H(+). The chain is Aryl acylamidase from Nocardia globerula.